The following is a 67-amino-acid chain: Large ribosomal subunit protein bL32 (67 aa).

A compositionally biased stretch (basic residues) spans 1-19; it reads MAVPKRKMSRANTRMRRSQ. A disordered region spans residues 1–22; the sequence is MAVPKRKMSRANTRMRRSQWKA.

The protein belongs to the bacterial ribosomal protein bL32 family.

The protein is Large ribosomal subunit protein bL32 of Kocuria rhizophila (strain ATCC 9341 / DSM 348 / NBRC 103217 / DC2201).